A 484-amino-acid polypeptide reads, in one-letter code: Probable glycine dehydrogenase (decarboxylating) subunit 2 (484 aa).

The residue at position 264 (K264) is an N6-(pyridoxal phosphate)lysine.

The protein belongs to the GcvP family. C-terminal subunit subfamily. The glycine cleavage system is composed of four proteins: P, T, L and H. In this organism, the P 'protein' is a heterodimer of two subunits. It depends on pyridoxal 5'-phosphate as a cofactor.

It catalyses the reaction N(6)-[(R)-lipoyl]-L-lysyl-[glycine-cleavage complex H protein] + glycine + H(+) = N(6)-[(R)-S(8)-aminomethyldihydrolipoyl]-L-lysyl-[glycine-cleavage complex H protein] + CO2. In terms of biological role, the glycine cleavage system catalyzes the degradation of glycine. The P protein binds the alpha-amino group of glycine through its pyridoxal phosphate cofactor; CO(2) is released and the remaining methylamine moiety is then transferred to the lipoamide cofactor of the H protein. The chain is Probable glycine dehydrogenase (decarboxylating) subunit 2 from Legionella pneumophila (strain Paris).